A 162-amino-acid polypeptide reads, in one-letter code: Endoribonuclease YbeY (162 aa).

Residues histidine 130, histidine 134, and histidine 140 each contribute to the Zn(2+) site.

This sequence belongs to the endoribonuclease YbeY family. The cofactor is Zn(2+).

It localises to the cytoplasm. Functionally, single strand-specific metallo-endoribonuclease involved in late-stage 70S ribosome quality control and in maturation of the 3' terminus of the 16S rRNA. This Nitratidesulfovibrio vulgaris (strain ATCC 29579 / DSM 644 / CCUG 34227 / NCIMB 8303 / VKM B-1760 / Hildenborough) (Desulfovibrio vulgaris) protein is Endoribonuclease YbeY.